Here is a 149-residue protein sequence, read N- to C-terminus: MVIKIHDLRPAPGSKRDKIRVGRGEGSKGKTAGRGTKGTKARKNVSPRFEGGQMPIHMRLPKLRGFKNRFRTEFHGVNVGKLAAAFPQGGTVGIDELISAGLANKGELVKILGDGDLEGVKLEVTAHAFTGSAQEKITAAGGSVTKLDR.

Over residues 1–28 (MVIKIHDLRPAPGSKRDKIRVGRGEGSK) the composition is skewed to basic and acidic residues. The disordered stretch occupies residues 1–54 (MVIKIHDLRPAPGSKRDKIRVGRGEGSKGKTAGRGTKGTKARKNVSPRFEGGQM).

Belongs to the universal ribosomal protein uL15 family. In terms of assembly, part of the 50S ribosomal subunit.

In terms of biological role, binds to the 23S rRNA. The chain is Large ribosomal subunit protein uL15 from Saccharopolyspora erythraea (strain ATCC 11635 / DSM 40517 / JCM 4748 / NBRC 13426 / NCIMB 8594 / NRRL 2338).